The chain runs to 391 residues: MAILNMQDLELQGKRVLIREDLNVPVKDGVVTSDARLRASLPTIKLALEKGAAVMVMSHLGRPTEGEFNAEFSMQPVVDYLTKALDCPVSLATEYLDGVEVAVGEVVVFENVRFNVGEKKNDEALAKKMAALCDVYVMDAFGTAHRAQASTHGVGLHAPIACAGPLLAGELAALGKALDNPARPMVAIVGGSKVSTKLTVLESLSTKVDQLVVGGGIANTFVAAAGHQVGKSLYEADLIEEAKRLVANAQSRGGDIPVPTDVVVASEFSPTATATLKDVSTVSDTDMIFDIGPDSAEALAEIIKNAGTVVWNGPVGVFEFDQFGEGTKRIAQAIAESNAFSIAGGGDTLAAVDKYGIADKVSYISTGGGAFLEFLEGKELPAVAMLESRGQ.

Residues 21 to 23 (DLN), arginine 36, 59 to 62 (HLGR), arginine 113, and arginine 146 contribute to the substrate site. ATP-binding positions include lysine 197, glutamate 319, and 345–348 (GGDT).

It belongs to the phosphoglycerate kinase family. Monomer.

It is found in the cytoplasm. The enzyme catalyses (2R)-3-phosphoglycerate + ATP = (2R)-3-phospho-glyceroyl phosphate + ADP. Its pathway is carbohydrate degradation; glycolysis; pyruvate from D-glyceraldehyde 3-phosphate: step 2/5. The sequence is that of Phosphoglycerate kinase from Shewanella halifaxensis (strain HAW-EB4).